The following is a 1748-amino-acid chain: RANBP2-like and GRIP domain-containing protein 1 (1748 aa).

Phosphothreonine is present on T14. TPR repeat units lie at residues 51-84, 575-608, and 639-672; these read PRAHRFLGLLYELEENTEKAVECYRRSLELNPPQ, QKMGRGLNSSYDQQEYIGRSVHYWKKVLPLLKII, and EDAHITFAILDAVHGNIEDAVTAFESIKSVVSYW. A disordered region spans residues 751-796; it reads GPLYKNGSLRNADSEIKHSTPSPTKYSLSPSKSYKYSPKTPPRWAE. Positions 769-788 are enriched in low complexity; that stretch reads STPSPTKYSLSPSKSYKYSP. A RanBD1 1 domain is found at 1021 to 1157; sequence HFEPVVQMPE…FEECQRLLLD (137 aa). Disordered regions lie at residues 1198–1233 and 1291–1316; these read TKVTEEENKGSGTGAAGASDTTIKPNPENTGPTLEW and AKLNQSGTSVGTDEESDVTQEEERDG. Over residues 1220–1229 the composition is skewed to polar residues; that stretch reads IKPNPENTGP. Positions 1302–1314 are enriched in acidic residues; that stretch reads TDEESDVTQEEER. Positions 1318–1454 constitute a RanBD1 2 domain; it reads YFEPVVPLPD…FDEAKTAQEK (137 aa). Positions 1565–1578 are enriched in polar residues; sequence NDSETSSVAQSGSE. The disordered stretch occupies residues 1565–1606; the sequence is NDSETSSVAQSGSESKVEPKKCELSKNSDIEQSSDSKVKNLS. A compositionally biased stretch (basic and acidic residues) spans 1579–1602; sequence SKVEPKKCELSKNSDIEQSSDSKV. In terms of domain architecture, GRIP spans 1685–1735; sequence QEESAANVEHLKNVLLQFIFLKPGSERESLLPVINTMLQLSPEEKGKLAAV.

The protein is RANBP2-like and GRIP domain-containing protein 1 (RGPD1) of Homo sapiens (Human).